The primary structure comprises 378 residues: 1-acyl-sn-glycerol-3-phosphate acyltransferase delta (378 aa).

A helical transmembrane segment spans residues F11–I31. Residues H96–D101 carry the HXXXXD motif motif. 3 helical membrane-spanning segments follow: residues E125–S145, T307–V327, and L338–V358.

It belongs to the 1-acyl-sn-glycerol-3-phosphate acyltransferase family.

The protein localises to the endoplasmic reticulum membrane. It carries out the reaction a 1-acyl-sn-glycero-3-phosphate + an acyl-CoA = a 1,2-diacyl-sn-glycero-3-phosphate + CoA. The catalysed reaction is (4Z,7Z,10Z,13Z,16Z,19Z)-docosahexaenoyl-CoA + 1-hexadecanoyl-sn-glycero-3-phosphate = 1-hexadecanoyl-2-(4Z,7Z,10Z,13Z,16Z,19Z-docosahexaenoyl)-sn-glycero-3-phosphate + CoA. The enzyme catalyses 1-octadecanoyl-sn-glycero-3-phosphate + (9Z,12Z)-octadecadienoyl-CoA = 1-octadecanoyl-2-(9Z,12Z-octadecadienoyl)-sn-glycero-3-phosphate + CoA. It catalyses the reaction 1-octadecanoyl-sn-glycero-3-phosphate + (4Z,7Z,10Z,13Z,16Z,19Z)-docosahexaenoyl-CoA = 1-octadecanoyl-2-(4Z,7Z,10Z,13Z,16Z,19Z-docosahexaenoyl)-sn-glycero-3-phosphate + CoA. It carries out the reaction (4Z,7Z,10Z,13Z,16Z,19Z)-docosahexaenoyl-CoA + 1-(9Z-octadecenoyl)-sn-glycero-3-phosphate = 1-(9Z-octadecenoyl)-2-(4Z,7Z,10Z,13Z,16Z,19Z-docosahexaenoyl)-sn-glycero-3-phosphate + CoA. Its pathway is phospholipid metabolism; CDP-diacylglycerol biosynthesis; CDP-diacylglycerol from sn-glycerol 3-phosphate: step 2/3. Functionally, converts 1-acyl-sn-glycerol-3-phosphate (lysophosphatidic acid or LPA) into 1,2-diacyl-sn-glycerol-3-phosphate (phosphatidic acid or PA) by incorporating an acyl moiety at the sn-2 position of the glycerol backbone. Exhibits high acyl-CoA specificity for polyunsaturated fatty acyl-CoA, especially docosahexaenoyl-CoA (22:6-CoA, DHA-CoA). This is 1-acyl-sn-glycerol-3-phosphate acyltransferase delta (AGPAT4) from Pongo abelii (Sumatran orangutan).